Reading from the N-terminus, the 330-residue chain is Protoheme IX farnesyltransferase (330 aa).

9 helical membrane passes run 30–50 (LVKP…MWMA), 58–78 (FFIT…INMV), 106–126 (LIFS…FTNL), 127–147 (LAAG…THWL), 155–175 (IVIG…ATTG), 182–202 (WVMF…LAIL), 228–248 (ILLY…PLGM), 249–269 (LGSF…WKAV), and 281–301 (AASL…AMGL).

This sequence belongs to the UbiA prenyltransferase family. Protoheme IX farnesyltransferase subfamily.

Its subcellular location is the cell inner membrane. It carries out the reaction heme b + (2E,6E)-farnesyl diphosphate + H2O = Fe(II)-heme o + diphosphate. Its pathway is porphyrin-containing compound metabolism; heme O biosynthesis; heme O from protoheme: step 1/1. In terms of biological role, converts heme B (protoheme IX) to heme O by substitution of the vinyl group on carbon 2 of heme B porphyrin ring with a hydroxyethyl farnesyl side group. This is Protoheme IX farnesyltransferase from Synechococcus sp. (strain JA-2-3B'a(2-13)) (Cyanobacteria bacterium Yellowstone B-Prime).